The primary structure comprises 145 residues: Peptide methionine sulfoxide reductase MsrB (145 aa).

A MsrB domain is found at 6–129 (KNERLQQLTD…NSAALRFIPV (124 aa)). Cysteine 118 functions as the Nucleophile in the catalytic mechanism.

Belongs to the MsrB Met sulfoxide reductase family.

The enzyme catalyses L-methionyl-[protein] + [thioredoxin]-disulfide + H2O = L-methionyl-(R)-S-oxide-[protein] + [thioredoxin]-dithiol. This chain is Peptide methionine sulfoxide reductase MsrB, found in Listeria monocytogenes serotype 4b (strain CLIP80459).